Here is a 444-residue protein sequence, read N- to C-terminus: Protein EMP46 (444 aa).

A signal peptide spans 1-46 (MTTRKTASSLQLLGKITGTKAGTKQKKMNFINGLIWLYMCVWMVHG). Topologically, residues 47 to 408 (KVTQKDELKW…YGKQTKGHDE (362 aa)) are lumenal. The L-type lectin-like domain occupies 52-269 (DELKWNKGYS…EILKMKLYDG (218 aa)). Tyr177 lines the K(+) pocket. Residues Cys196 and Cys230 are joined by a disulfide bond. The helical transmembrane segment at 409 to 429 (IFSKISVWLALLIFIMITLAY) threads the bilayer. The mediates the interactions with COPI and COPII coat complexes stretch occupies residues 429-432 (YYMF). Topologically, residues 430 to 444 (YMFRINQDIKKVKLL) are cytoplasmic. A Di-lysine motif motif is present at residues 440-444 (KVKLL).

It belongs to the EMP46/EMP47 family. As to quaternary structure, interacts with EMP47 in the endoplasmic reticulum membrane in order to be transported to the Golgi apparatus. Interacts with the coatomer proteins COP1, SEC21 and SEC23.

Its subcellular location is the golgi apparatus membrane. It is found in the endoplasmic reticulum membrane. Its function is as follows. Involved in the secretion of glycoproteins and in nucleus architecture and gene silencing. This is Protein EMP46 (EMP46) from Saccharomyces cerevisiae (strain ATCC 204508 / S288c) (Baker's yeast).